Reading from the N-terminus, the 93-residue chain is Protein F-93 (93 aa).

In terms of assembly, homodimer.

Probable transcription factor that recognizes a (pseudo-)palindromic DNA target sequence. This Saccharolobus solfataricus (Sulfolobus solfataricus) protein is Protein F-93.